Consider the following 1624-residue polypeptide: NAD-specific glutamate dehydrogenase (1624 aa).

Lys-845 is a catalytic residue.

The protein belongs to the Glu/Leu/Phe/Val dehydrogenases family. As to quaternary structure, interacts with (unphosphorylated) GarA.

The enzyme catalyses L-glutamate + NAD(+) + H2O = 2-oxoglutarate + NH4(+) + NADH + H(+). With respect to regulation, activity is inhibited by unphosphorylated GarA. Functionally, catalyzes the reversible conversion of L-glutamate to 2-oxoglutarate. The polypeptide is NAD-specific glutamate dehydrogenase (gdh) (Mycobacterium tuberculosis (strain ATCC 25618 / H37Rv)).